We begin with the raw amino-acid sequence, 656 residues long: uncharacterized protein (656 aa).

Positions 623 to 656 (EIDIPGTPASIDPEWSRPPGSITDDHVFDAPLHR) are disordered. The segment covering 645-656 (TDDHVFDAPLHR) has biased composition (basic and acidic residues).

This is an uncharacterized protein from Mycobacterium tuberculosis (strain ATCC 25618 / H37Rv).